The following is a 732-amino-acid chain: 1,4-alpha-glucan branching enzyme GlgB (732 aa).

Asp408 acts as the Nucleophile in catalysis. The Proton donor role is filled by Glu461.

It belongs to the glycosyl hydrolase 13 family. GlgB subfamily. As to quaternary structure, monomer.

The catalysed reaction is Transfers a segment of a (1-&gt;4)-alpha-D-glucan chain to a primary hydroxy group in a similar glucan chain.. Its pathway is glycan biosynthesis; glycogen biosynthesis. In terms of biological role, catalyzes the formation of the alpha-1,6-glucosidic linkages in glycogen by scission of a 1,4-alpha-linked oligosaccharide from growing alpha-1,4-glucan chains and the subsequent attachment of the oligosaccharide to the alpha-1,6 position. The sequence is that of 1,4-alpha-glucan branching enzyme GlgB from Rhodococcus jostii (strain RHA1).